The primary structure comprises 86 residues: Small ribosomal subunit protein uS15 (86 aa).

It belongs to the universal ribosomal protein uS15 family. As to quaternary structure, part of the 30S ribosomal subunit. Forms a bridge to the 50S subunit in the 70S ribosome, contacting the 23S rRNA.

In terms of biological role, one of the primary rRNA binding proteins, it binds directly to 16S rRNA where it helps nucleate assembly of the platform of the 30S subunit by binding and bridging several RNA helices of the 16S rRNA. Functionally, forms an intersubunit bridge (bridge B4) with the 23S rRNA of the 50S subunit in the ribosome. The sequence is that of Small ribosomal subunit protein uS15 from Endomicrobium trichonymphae.